The primary structure comprises 255 residues: tRNA uridine(34) hydroxylase (255 aa).

The region spanning 125-219 is the Rhodanese domain; that stretch reads AAPDTLLIDT…YLEGIPESES (95 aa). The active-site Cysteine persulfide intermediate is C179.

Belongs to the TrhO family.

The catalysed reaction is uridine(34) in tRNA + AH2 + O2 = 5-hydroxyuridine(34) in tRNA + A + H2O. Its function is as follows. Catalyzes oxygen-dependent 5-hydroxyuridine (ho5U) modification at position 34 in tRNAs. This Nitrobacter hamburgensis (strain DSM 10229 / NCIMB 13809 / X14) protein is tRNA uridine(34) hydroxylase.